The sequence spans 242 residues: LexA repressor (242 aa).

Residues 26-46 (FEEMKAALNLKSKSGIHRLIS) constitute a DNA-binding region (H-T-H motif). Active-site for autocatalytic cleavage activity residues include Ser-163 and Lys-201.

It belongs to the peptidase S24 family. In terms of assembly, homodimer.

It carries out the reaction Hydrolysis of Ala-|-Gly bond in repressor LexA.. In terms of biological role, represses a number of genes involved in the response to DNA damage (SOS response), including recA and lexA. In the presence of single-stranded DNA, RecA interacts with LexA causing an autocatalytic cleavage which disrupts the DNA-binding part of LexA, leading to derepression of the SOS regulon and eventually DNA repair. The polypeptide is LexA repressor (Granulibacter bethesdensis (strain ATCC BAA-1260 / CGDNIH1)).